The sequence spans 539 residues: Chaperonin GroEL (539 aa).

ATP-binding positions include threonine 29 to proline 32, aspartate 86 to threonine 90, glycine 413, and aspartate 492.

Belongs to the chaperonin (HSP60) family. Forms a cylinder of 14 subunits composed of two heptameric rings stacked back-to-back. Interacts with the co-chaperonin GroES.

The protein resides in the cytoplasm. It carries out the reaction ATP + H2O + a folded polypeptide = ADP + phosphate + an unfolded polypeptide.. In terms of biological role, together with its co-chaperonin GroES, plays an essential role in assisting protein folding. The GroEL-GroES system forms a nano-cage that allows encapsulation of the non-native substrate proteins and provides a physical environment optimized to promote and accelerate protein folding. The sequence is that of Chaperonin GroEL from Fusobacterium nucleatum subsp. nucleatum (strain ATCC 25586 / DSM 15643 / BCRC 10681 / CIP 101130 / JCM 8532 / KCTC 2640 / LMG 13131 / VPI 4355).